The chain runs to 102 residues: Chorion protein S15 (102 aa).

An N-terminal signal peptide occupies residues 1–18 (MKFLIAFVAIAFFACVSA).

The protein belongs to the chorion protein S15/S18 family.

It localises to the secreted. Functionally, chorion membrane (egg shell) protein; plays a role in protecting the egg from the environment. The chain is Chorion protein S15 (Cp15) from Drosophila grimshawi (Hawaiian fruit fly).